The sequence spans 96 residues: Mapk-regulated corepressor-interacting protein 1 (96 aa).

2 disordered regions span residues 1 to 28 (MASS…GSEI) and 76 to 96 (AFKP…AKKS). A PXDLS motif motif is present at residues 79-83 (PVDLS). Residues 81 to 96 (DLSDLKRRNTQDAKKS) show a composition bias toward basic and acidic residues.

Belongs to the MCRIP family.

The protein resides in the nucleus. Its subcellular location is the cytoplasm. It localises to the stress granule. Functionally, may play a role in the regulation of the epithelial-mesenchymal transition. This Gallus gallus (Chicken) protein is Mapk-regulated corepressor-interacting protein 1 (MCRIP1).